A 279-amino-acid polypeptide reads, in one-letter code: Probable endonuclease 4 (279 aa).

9 residues coordinate Zn(2+): H69, H109, E145, D179, H182, H216, D229, H231, and E261.

Belongs to the AP endonuclease 2 family. Zn(2+) serves as cofactor.

It catalyses the reaction Endonucleolytic cleavage to 5'-phosphooligonucleotide end-products.. Functionally, endonuclease IV plays a role in DNA repair. It cleaves phosphodiester bonds at apurinic or apyrimidinic (AP) sites, generating a 3'-hydroxyl group and a 5'-terminal sugar phosphate. In Serratia proteamaculans (strain 568), this protein is Probable endonuclease 4.